The following is a 395-amino-acid chain: ATP phosphoribosyltransferase regulatory subunit (395 aa).

Belongs to the class-II aminoacyl-tRNA synthetase family. HisZ subfamily. As to quaternary structure, heteromultimer composed of HisG and HisZ subunits.

The protein localises to the cytoplasm. Its pathway is amino-acid biosynthesis; L-histidine biosynthesis; L-histidine from 5-phospho-alpha-D-ribose 1-diphosphate: step 1/9. Functionally, required for the first step of histidine biosynthesis. May allow the feedback regulation of ATP phosphoribosyltransferase activity by histidine. The protein is ATP phosphoribosyltransferase regulatory subunit of Pseudomonas syringae pv. syringae (strain B728a).